Consider the following 439-residue polypeptide: DNA primase DnaG (439 aa).

In terms of domain architecture, Toprim spans 169 to 243 (DSIIVVEGRA…DIDYVARAPY (75 aa)). E175, D217, and D219 together coordinate Mg(2+).

This sequence belongs to the archaeal DnaG primase family. As to quaternary structure, forms a ternary complex with MCM helicase and DNA. Mg(2+) serves as cofactor.

It catalyses the reaction ssDNA + n NTP = ssDNA/pppN(pN)n-1 hybrid + (n-1) diphosphate.. In terms of biological role, RNA polymerase that catalyzes the synthesis of short RNA molecules used as primers for DNA polymerase during DNA replication. The polypeptide is DNA primase DnaG (Methanococcus maripaludis (strain C7 / ATCC BAA-1331)).